The following is a 355-amino-acid chain: Protein RecA (355 aa).

Residue 65–72 (GPESSGKT) coordinates ATP.

Belongs to the RecA family.

Its subcellular location is the cytoplasm. Functionally, can catalyze the hydrolysis of ATP in the presence of single-stranded DNA, the ATP-dependent uptake of single-stranded DNA by duplex DNA, and the ATP-dependent hybridization of homologous single-stranded DNAs. It interacts with LexA causing its activation and leading to its autocatalytic cleavage. The chain is Protein RecA from Pseudomonas putida (strain W619).